We begin with the raw amino-acid sequence, 110 residues long: MAEGEIEDRELEELRRKKLEELQKKAELERQAQIAAAQRRMALKRILTPEALARLDNIRIVRPELAEALEQQIIALASSGRVKVPIDDNTLKKILEAVYSQTRKEYKFRL.

This sequence belongs to the PDCD5 family.

This Pyrobaculum arsenaticum (strain DSM 13514 / JCM 11321 / PZ6) protein is DNA-binding protein Pars_1791.